A 461-amino-acid polypeptide reads, in one-letter code: CBL-interacting protein kinase 1 (461 aa).

Residues 19–274 form the Protein kinase domain; the sequence is YEIGRTLGEG…IAGIKEHEWF (256 aa). ATP is bound by residues 25 to 33 and Lys48; that span reads LGEGNFGKV. Asp142 serves as the catalytic Proton acceptor. The activation loop stretch occupies residues 160 to 189; that stretch reads DFGLSALPQHLGNDGLLHTTCGSPNYIAPE. In terms of domain architecture, NAF spans 308 to 332; the sequence is EKPTHINAFQLIGMASALDLSGFFE. Residues 338-367 form a PPI region; it reads QRKIRFTSTHSPKDLFDKIENVVTEMGFQV.

The protein belongs to the protein kinase superfamily. CAMK Ser/Thr protein kinase family. SNF1 subfamily. Mn(2+) serves as cofactor.

The catalysed reaction is L-seryl-[protein] + ATP = O-phospho-L-seryl-[protein] + ADP + H(+). The enzyme catalyses L-threonyl-[protein] + ATP = O-phospho-L-threonyl-[protein] + ADP + H(+). CIPK serine-threonine protein kinases interact with CBL proteins. Binding of a CBL protein to the regulatory NAF domain of CIPK protein lead to the activation of the kinase in a calcium-dependent manner. This chain is CBL-interacting protein kinase 1 (CIPK1), found in Oryza sativa subsp. japonica (Rice).